We begin with the raw amino-acid sequence, 431 residues long: MTLNRRDFIKTSGAAVAAVGILGFPHLAFGAGRKVVVVGGGTGGATAAKYIKLADPSIEVTLIEPNTDYYTCYLSNEVIGGDRKLESIKHGYDGLRAHGIQVVHDSATGIDPDKKLVKTAGGAEFGYDRCVVAPGIELIYDKIEGYSEEAAAKLPHAWKAGEQTAILRKQLEDMADGGTVVIAPPAAPFRCPPGPYERASQVAYYLKAHKPKSKVIILDSSQTFSKQSQFSKGWERLYGFGTENAMIEWHPGPDSAVVKVDGGEMMVETAFGDEFKADVINLIPPQRAGKIAQIAGLTNDAGWCPVDIKTFESSIHKGIHVIGDACIANPMPKSGYSANSQGKVAAAAVVALLKGEEPGTPSYLNTCYSILAPAYGISVAAIYRPNADGSAIESVPDSGGVTPVDAPDWVLEREVQYAYSWYNNIVHDTFG.

Residues 1–30 (MTLNRRDFIKTSGAAVAAVGILGFPHLAFG) constitute a signal peptide (tat-type signal). 70 to 76 (YTCYLSN) provides a ligand contact to FAD. A disulfide bridge connects residues C191 and C367.

In terms of assembly, dimer of one cytochrome and one flavoprotein. Post-translationally, predicted to be exported by the Tat system. The position of the signal peptide cleavage has been experimentally proven.

Its subcellular location is the periplasm. The enzyme catalyses hydrogen sulfide + 2 Fe(III)-[cytochrome c] = sulfur + 2 Fe(II)-[cytochrome c] + H(+). This Allochromatium vinosum (strain ATCC 17899 / DSM 180 / NBRC 103801 / NCIMB 10441 / D) (Chromatium vinosum) protein is Sulfide dehydrogenase [flavocytochrome c] flavoprotein chain (fccB).